Here is a 197-residue protein sequence, read N- to C-terminus: Interleukin-17C (197 aa).

Positions M1–A18 are cleaved as a signal peptide. Cystine bridges form between C129–C189 and C134–C191.

This sequence belongs to the IL-17 family. Binds to a heterodimer formed by IL17RA and IL17RE.

It is found in the secreted. In terms of biological role, cytokine that plays a crucial role in innate immunity of the epithelium, including to intestinal bacterial pathogens, in an autocrine manner. Stimulates the production of antibacterial peptides and pro-inflammatory molecules for host defense by signaling through the NF-kappa-B and MAPK pathways. Acts synergically with IL22 in inducing the expression of antibacterial peptides, including S100A8, S100A9, REG3A and REG3G. Synergy is also observed with TNF and IL1B in inducing DEFB2 from keratinocytes. Depending on the type of insult, may have both protective and pathogenic properties, either by maintaining epithelial homeostasis after an inflammatory challenge or by promoting inflammatory phenotype. Enhanced IL17C/IL17RE signaling may also lead to greater susceptibility to autoimmune diseases. The protein is Interleukin-17C (IL17C) of Homo sapiens (Human).